The primary structure comprises 301 residues: MGGEALTLPKDLLDFSGYGPKELQALLDLAERLKRERYRGEDLKGKVLALLFEKPSLRTRTTLEVAMVHLGGHAVYLDQKQVGIGEREPVRDVAKNLERFVEGIAARVFRHETVEALARHAKVPVVNALSDRAHPLQALADLLTLKEVFGGLAGLEVAWVGDGNNVLNSLLEVAPLAGLKVRVATPKGYEPDPGLLKRANAFFTHDPKEAALGAHALYTDVWTSMGQEAERAKRLRDFQGFQVNGELLKLLRPEGVFLHCLPAHYGEETTEEAVHGPRSRVFDQAENRLHTAKAVLLTLLK.

Residues Arg107 and His134 to Gln137 each bind carbamoyl phosphate. L-ornithine is bound by residues Asn165, Asp220, and Ser224–Met225. Carbamoyl phosphate contacts are provided by residues Cys260–Leu261 and Arg288.

The protein belongs to the aspartate/ornithine carbamoyltransferase superfamily. OTCase family. In terms of assembly, homotrimer.

The protein localises to the cytoplasm. It carries out the reaction carbamoyl phosphate + L-ornithine = L-citrulline + phosphate + H(+). Its pathway is amino-acid biosynthesis; L-arginine biosynthesis; L-arginine from L-ornithine and carbamoyl phosphate: step 1/3. Its activity is regulated as follows. Inhibited by delta-N-phosphonoacetyl-L-ornithine. Its function is as follows. Reversibly catalyzes the transfer of the carbamoyl group from carbamoyl phosphate (CP) to the N(epsilon) atom of ornithine (ORN) to produce L-citrulline, which is a substrate for argininosuccinate synthetase, the enzyme involved in the final step in arginine biosynthesis. The sequence is that of Ornithine carbamoyltransferase from Thermus thermophilus (strain ATCC BAA-163 / DSM 7039 / HB27).